The sequence spans 806 residues: Ankyrin repeat, bromo and BTB domain-containing protein DDB_G0293800 (806 aa).

5 ANK repeats span residues 1–30, 34–63, 67–96, 100–130, and 134–163; these read MSNK…DVNQ, SNRY…LVNC, RGAT…DVNC, AGST…DVNL, and EGST…RADV. A compositionally biased stretch (basic and acidic residues) spans 210 to 228; sequence GVGKKEDDDNNMKIDKQES. Positions 210 to 231 are disordered; sequence GVGKKEDDDNNMKIDKQESEQQ. The 69-residue stretch at 239 to 307 folds into the BTB domain; the sequence is SDITFLIENQ…IYTGSIEKFE (69 aa). Disordered stretches follow at residues 423-517 and 621-743; these read TRTA…SDSM and QNFP…EERR. 2 stretches are compositionally biased toward low complexity: residues 426 to 436 and 443 to 511; these read ANANASNSNQS and TSTT…SSSS. The Bromo domain maps to 516-622; it reads SMNEKNLTFC…NAFDQKFLQN (107 aa). Residues 626 to 641 are compositionally biased toward pro residues; it reads EKPPTYKPPPPTPTPI. Over residues 642–658 the composition is skewed to low complexity; sequence PTQQQQQQSTSSTSTPT. A compositionally biased stretch (basic and acidic residues) spans 666-675; sequence DEHVKVKEDT. Positions 676–693 are enriched in polar residues; sequence NSAQPTSSSSNHTNGENA. Residues 694–733 are compositionally biased toward low complexity; sequence SSSSSSSSSKQSNNNNNNNNNNNSNSTTNSSSSSSSTTTT. One can recognise an NET domain in the interval 727-806; sequence SSSTTTTQKK…ECFKKQKQDE (80 aa).

This is Ankyrin repeat, bromo and BTB domain-containing protein DDB_G0293800 from Dictyostelium discoideum (Social amoeba).